The primary structure comprises 467 residues: MKITALASAILAVVHGALALPARAPALDITLSQVNNTRIKAVVKNSGSEKITFVHLNFFNDPSPVKKVSLYRNATEVEFTGIKQRLRSDGLSNEALTTLAPGATYEDEFDIASTANLTQGGPVTVRTQGFVPIAMNNKIAGYIPYSSNELELEVDAVKAVAVPASIKPLDRRTKITSSCTGDRAAVLNTALRNAASIAGKAANAASSGSSALFAEYFKSTSGNIRSAVAARLKAVASEASLNGGGSTTYYCSDPYGYCDSNVLAYTLPSTNEVVNCELFYTLQEVTNDCHGQDQATTIIHEFTHAPGVYPPGTEDLGYGYSAATALSANNALNNADSYALFANAVYLNCQGQTGGQTMWDGNSQPGQTAPGTQTMWDGNSQPGQTEPGTQTMWDGNSQPGQTEPGTQTMWDGNSQPGQTEPGTQTMWDGNSQPGQTEPCTQTMWDGSSEPGQTEPDAHTTWGNFYQA.

The N-terminal stretch at 1 to 19 is a signal peptide; that stretch reads MKITALASAILAVVHGALA. Positions 20–172 are excised as a propeptide; sequence LPARAPALDI…PASIKPLDRR (153 aa). 2 disulfides stabilise this stretch: Cys179–Cys251 and Cys258–Cys276. His300 is a binding site for Zn(2+). The active site involves Glu301. Residues His304 and Asp315 each contribute to the Zn(2+) site. A compositionally biased stretch (polar residues) spans 359–451; the sequence is WDGNSQPGQT…TMWDGSSEPG (93 aa). The tract at residues 359-467 is disordered; it reads WDGNSQPGQT…HTTWGNFYQA (109 aa).

It belongs to the peptidase M35 family. It depends on Zn(2+) as a cofactor.

The protein localises to the secreted. The enzyme catalyses Preferential cleavage of bonds with hydrophobic residues in P1'. Also 3-Asn-|-Gln-4 and 8-Gly-|-Ser-9 bonds in insulin B chain.. Secreted metalloproteinase that allows assimilation of proteinaceous substrates. Shows high activities on basic nuclear substrates such as histone and protamine. The sequence is that of Neutral protease 2 homolog NFIA_031120 from Neosartorya fischeri (strain ATCC 1020 / DSM 3700 / CBS 544.65 / FGSC A1164 / JCM 1740 / NRRL 181 / WB 181) (Aspergillus fischerianus).